The sequence spans 483 residues: Probable glycosyltransferase 4 (483 aa).

Over Met1 to Leu26 the chain is Cytoplasmic. A helical; Signal-anchor for type II membrane protein transmembrane segment spans residues Leu27–Phe47. At Thr48–Met483 the chain is on the lumenal side. Positions Ala71 to Arg119 are disordered. The span at Ser77–Leu108 shows a compositional bias: pro residues. N-linked (GlcNAc...) asparagine glycosylation occurs at Asn448.

The protein belongs to the glycosyltransferase 34 family.

Its subcellular location is the golgi apparatus membrane. Functionally, probable glycosyltransferase that may be involved in the biosynthesis of xyloglucan. The chain is Probable glycosyltransferase 4 from Oryza sativa subsp. indica (Rice).